Consider the following 138-residue polypeptide: uncharacterized protein (138 aa).

The next 2 membrane-spanning stretches (helical) occupy residues 1-21 and 46-66; these read MEIG…EAIV and YAFI…HKFV.

Its subcellular location is the cell membrane. This is an uncharacterized protein from Methanocaldococcus jannaschii (strain ATCC 43067 / DSM 2661 / JAL-1 / JCM 10045 / NBRC 100440) (Methanococcus jannaschii).